A 918-amino-acid polypeptide reads, in one-letter code: Alpha-scruin (918 aa).

Kelch repeat units follow at residues 82 to 133 (VVLA…YFHR), 134 to 187 (RVYV…VMDE), 188 to 235 (RIFV…NNEG), 237 to 289 (IYVI…TQNK), 291 to 341 (IWIW…KTGA), and 342 to 390 (HVFI…AIPA). The interval 398–427 (EVPTSTPSSKAKPQPGSKPTSVKYKKQPDI) is disordered. Residues 430–459 (RNEAAKKVQRRWRRYIEQKSITKRMQQGDS) form the IQ domain. Kelch repeat units follow at residues 590–641 (VIIG…YYRS), 642–695 (AIYI…VFND), 696–743 (VLYA…AHGG), 745–795 (IWLL…VCDN), 797–849 (IWLC…ALES), and 851–898 (LYIA…TIPP).

Sperm.

Actin bundling protein found in the acrosomal sperm process. The sequence is that of Alpha-scruin from Limulus polyphemus (Atlantic horseshoe crab).